Here is a 410-residue protein sequence, read N- to C-terminus: Argininosuccinate synthase (410 aa).

ATP is bound by residues 14–22 (AYSGGLDTS) and alanine 41. Positions 92 and 97 each coordinate L-citrulline. Residue glycine 122 participates in ATP binding. L-aspartate-binding residues include threonine 124, asparagine 128, and aspartate 129. Residue asparagine 128 participates in L-citrulline binding. L-citrulline-binding residues include arginine 132, serine 183, serine 192, glutamate 268, and tyrosine 280.

The protein belongs to the argininosuccinate synthase family. Type 1 subfamily. Homotetramer.

The protein resides in the cytoplasm. The enzyme catalyses L-citrulline + L-aspartate + ATP = 2-(N(omega)-L-arginino)succinate + AMP + diphosphate + H(+). Its pathway is amino-acid biosynthesis; L-arginine biosynthesis; L-arginine from L-ornithine and carbamoyl phosphate: step 2/3. This is Argininosuccinate synthase from Parvibaculum lavamentivorans (strain DS-1 / DSM 13023 / NCIMB 13966).